Here is a 64-residue protein sequence, read N- to C-terminus: Large ribosomal subunit protein bL35 (64 aa).

2 stretches are compositionally biased toward basic residues: residues 1-26 (MPKM…KRSK) and 33-44 (LTKKSPKRKRKL). Residues 1–44 (MPKMKTHRGAAKRFKKTGTGKIKRSKAYTSHILTKKSPKRKRKL) are disordered.

It belongs to the bacterial ribosomal protein bL35 family.

In Alkaliphilus oremlandii (strain OhILAs) (Clostridium oremlandii (strain OhILAs)), this protein is Large ribosomal subunit protein bL35.